A 210-amino-acid polypeptide reads, in one-letter code: Ribosomal RNA small subunit methyltransferase G (210 aa).

Residues Gly-76, Leu-81, 127 to 128 (VE), and Arg-142 contribute to the S-adenosyl-L-methionine site.

This sequence belongs to the methyltransferase superfamily. RNA methyltransferase RsmG family.

It is found in the cytoplasm. The catalysed reaction is guanosine(527) in 16S rRNA + S-adenosyl-L-methionine = N(7)-methylguanosine(527) in 16S rRNA + S-adenosyl-L-homocysteine. In terms of biological role, specifically methylates the N7 position of guanine in position 527 of 16S rRNA. The sequence is that of Ribosomal RNA small subunit methyltransferase G from Aliivibrio fischeri (strain ATCC 700601 / ES114) (Vibrio fischeri).